Reading from the N-terminus, the 165-residue chain is MKKVLPVPKEFKPGDRFVAVGTLPLCEGCMLKERCEEYKRGWIYEVKGKVGLVEHDCKVHGKVVMGEVEEVGIPLILPKRLAIEGATVEYTPSKCTNKKCPHWRDCTAPWGERVKVKVREVLEEVQCPLGLPLVRVIGVPVEVKRRTRRNIKKGKGGHGKRGLAP.

This sequence belongs to the UPF0179 family.

In Ignicoccus hospitalis (strain KIN4/I / DSM 18386 / JCM 14125), this protein is UPF0179 protein Igni_1272.